The sequence spans 452 residues: tRNA modification GTPase MnmE (452 aa).

Arginine 21, glutamate 82, and arginine 121 together coordinate (6S)-5-formyl-5,6,7,8-tetrahydrofolate. A TrmE-type G domain is found at 214–372 (GARVVLVGRP…LAKTIATTLL (159 aa)). A K(+)-binding site is contributed by asparagine 224. GTP-binding positions include 224 to 229 (NVGKSS), 243 to 249 (TPIPGTT), 268 to 271 (DTAG), and 353 to 355 (SAR). A Mg(2+)-binding site is contributed by serine 228. Residues threonine 243, isoleucine 245, and threonine 248 each coordinate K(+). Threonine 249 is a Mg(2+) binding site. Lysine 452 is a binding site for (6S)-5-formyl-5,6,7,8-tetrahydrofolate.

Belongs to the TRAFAC class TrmE-Era-EngA-EngB-Septin-like GTPase superfamily. TrmE GTPase family. In terms of assembly, homodimer. Heterotetramer of two MnmE and two MnmG subunits. K(+) is required as a cofactor.

The protein resides in the cytoplasm. In terms of biological role, exhibits a very high intrinsic GTPase hydrolysis rate. Involved in the addition of a carboxymethylaminomethyl (cmnm) group at the wobble position (U34) of certain tRNAs, forming tRNA-cmnm(5)s(2)U34. This is tRNA modification GTPase MnmE from Chloroflexus aurantiacus (strain ATCC 29366 / DSM 635 / J-10-fl).